Reading from the N-terminus, the 386-residue chain is Acyl-lipid omega-3 desaturase (cytochrome b5), endoplasmic reticulum (386 aa).

Positions 1-30 (MVVAMDQRTNVNGDPGAGDRKKEERFDPSA) are disordered. Residues 17 to 27 (AGDRKKEERFD) show a composition bias toward basic and acidic residues. The chain crosses the membrane as a helical span at residues 63–83 (IIAVAALAIAAVYVDSWFLWP). Residues 101 to 105 (HDCGH) carry the Histidine box-1 motif. The Histidine box-2 motif lies at 137-141 (HRTHH). Transmembrane regions (helical) follow at residues 220 to 240 (WSIM…LAVL) and 242 to 262 (VYGV…YLHH). Residues 304-308 (HVIHH) carry the Histidine box-3 motif.

The protein belongs to the fatty acid desaturase type 1 family. In terms of tissue distribution, abundant in leaves and seedlings. Barely detectable in root tissue.

Its subcellular location is the endoplasmic reticulum membrane. It catalyses the reaction a (9Z,12Z)-octadecadienoyl-containing glycerolipid + 2 Fe(II)-[cytochrome b5] + O2 + 2 H(+) = (9Z,12Z,15Z)-octadecatrienoyl-containing glycerolipid + 2 Fe(III)-[cytochrome b5] + 2 H2O. It participates in lipid metabolism; polyunsaturated fatty acid biosynthesis. Its function is as follows. Microsomal (ER) omega-3 fatty acid desaturase introduces the third double bond in the biosynthesis of 18:3 fatty acids, important constituents of plant membranes. It is thought to use cytochrome b5 as an electron donor and to act on fatty acids esterified to phosphatidylcholine and, possibly, other phospholipids. The polypeptide is Acyl-lipid omega-3 desaturase (cytochrome b5), endoplasmic reticulum (Arabidopsis thaliana (Mouse-ear cress)).